The sequence spans 520 residues: Amine oxidase [flavin-containing] B (520 aa).

Ser-2 is modified (N-acetylserine). The Cytoplasmic segment spans residues 2-489; it reads SGKCDVVVVG…TFLERHLPSV (488 aa). Lys-52 bears the N6-acetyllysine mark. Position 397 is an S-8alpha-FAD cysteine (Cys-397). A helical; Anchor for type IV membrane protein membrane pass occupies residues 490–516; that stretch reads PGLLRLIGLTAIFSATALGVLAHKRGL. Topologically, residues 517–520 are mitochondrial intermembrane; it reads LVRV.

This sequence belongs to the flavin monoamine oxidase family. As to quaternary structure, monomer, homo- or heterodimer (containing two subunits of similar size). Each subunit contains a covalently bound flavin. Enzymatically active as monomer. Requires FAD as cofactor.

The protein resides in the mitochondrion outer membrane. The enzyme catalyses a secondary aliphatic amine + O2 + H2O = a primary amine + an aldehyde + H2O2. It catalyses the reaction (R)-adrenaline + O2 + H2O = (R)-3,4-dihydroxymandelaldehyde + methylamine + H2O2. It carries out the reaction a primary methyl amine + O2 + H2O = an aldehyde + H2O2 + NH4(+). The catalysed reaction is benzylamine + O2 + H2O = benzaldehyde + H2O2 + NH4(+). The enzyme catalyses dopamine + O2 + H2O = 3,4-dihydroxyphenylacetaldehyde + H2O2 + NH4(+). It catalyses the reaction tyramine + O2 + H2O = (4-hydroxyphenyl)acetaldehyde + H2O2 + NH4(+). It carries out the reaction (R)-noradrenaline + O2 + H2O = (R)-3,4-dihydroxymandelaldehyde + H2O2 + NH4(+). The catalysed reaction is 2-phenylethylamine + O2 + H2O = 2-phenylacetaldehyde + H2O2 + NH4(+). The enzyme catalyses N-acetylputrescine + O2 + H2O = 4-acetamidobutanal + H2O2 + NH4(+). In terms of biological role, catalyzes the oxidative deamination of primary and some secondary amines such as neurotransmitters, and exogenous amines including the tertiary amine, neurotoxin 1-methyl-4-phenyl-1,2,3,6-tetrahydropyridine (MPTP), with concomitant reduction of oxygen to hydrogen peroxide and participates in the metabolism of neuroactive and vasoactive amines in the central nervous system and peripheral tissues. Preferentially degrades benzylamine and phenylethylamine. The sequence is that of Amine oxidase [flavin-containing] B from Canis lupus familiaris (Dog).